A 200-amino-acid chain; its full sequence is Molybdenum cofactor guanylyltransferase (200 aa).

Residues L15–G17, K28, D74, and D104 contribute to the GTP site. Position 104 (D104) interacts with Mg(2+).

It belongs to the MobA family. As to quaternary structure, monomer. Mg(2+) is required as a cofactor.

It localises to the cytoplasm. The enzyme catalyses Mo-molybdopterin + GTP + H(+) = Mo-molybdopterin guanine dinucleotide + diphosphate. Functionally, transfers a GMP moiety from GTP to Mo-molybdopterin (Mo-MPT) cofactor (Moco or molybdenum cofactor) to form Mo-molybdopterin guanine dinucleotide (Mo-MGD) cofactor. The protein is Molybdenum cofactor guanylyltransferase of Pseudomonas fluorescens (strain SBW25).